Reading from the N-terminus, the 277-residue chain is Large ribosomal subunit protein uL2 (277 aa).

2 disordered regions span residues 36 to 55 and 213 to 277; these read PLPK…RHHG and WKGI…RKKK.

This sequence belongs to the universal ribosomal protein uL2 family. In terms of assembly, part of the 50S ribosomal subunit. Forms a bridge to the 30S subunit in the 70S ribosome.

In terms of biological role, one of the primary rRNA binding proteins. Required for association of the 30S and 50S subunits to form the 70S ribosome, for tRNA binding and peptide bond formation. It has been suggested to have peptidyltransferase activity; this is somewhat controversial. Makes several contacts with the 16S rRNA in the 70S ribosome. In Staphylococcus aureus (strain bovine RF122 / ET3-1), this protein is Large ribosomal subunit protein uL2.